A 183-amino-acid polypeptide reads, in one-letter code: ATP synthase subunit b, chloroplastic (183 aa).

A helical membrane pass occupies residues 25–45 (DILATNLINLTVVVGVLIFFG).

The protein belongs to the ATPase B chain family. F-type ATPases have 2 components, F(1) - the catalytic core - and F(0) - the membrane proton channel. F(1) has five subunits: alpha(3), beta(3), gamma(1), delta(1), epsilon(1). F(0) has four main subunits: a(1), b(1), b'(1) and c(10-14). The alpha and beta chains form an alternating ring which encloses part of the gamma chain. F(1) is attached to F(0) by a central stalk formed by the gamma and epsilon chains, while a peripheral stalk is formed by the delta, b and b' chains.

It localises to the plastid. The protein localises to the chloroplast thylakoid membrane. F(1)F(0) ATP synthase produces ATP from ADP in the presence of a proton or sodium gradient. F-type ATPases consist of two structural domains, F(1) containing the extramembraneous catalytic core and F(0) containing the membrane proton channel, linked together by a central stalk and a peripheral stalk. During catalysis, ATP synthesis in the catalytic domain of F(1) is coupled via a rotary mechanism of the central stalk subunits to proton translocation. Functionally, component of the F(0) channel, it forms part of the peripheral stalk, linking F(1) to F(0). This chain is ATP synthase subunit b, chloroplastic, found in Sorghum bicolor (Sorghum).